Here is a 633-residue protein sequence, read N- to C-terminus: Probable potassium transport system protein Kup 3 (633 aa).

Transmembrane regions (helical) follow at residues L24–F44, V61–V81, L114–I134, P148–V168, F180–F200, I222–L242, W258–L278, I298–G318, I348–F368, A377–M397, L405–A425, and I427–I447.

It belongs to the HAK/KUP transporter (TC 2.A.72) family.

It localises to the cell inner membrane. The catalysed reaction is K(+)(in) + H(+)(in) = K(+)(out) + H(+)(out). Its function is as follows. Transport of potassium into the cell. Likely operates as a K(+):H(+) symporter. The chain is Probable potassium transport system protein Kup 3 from Rhizobium johnstonii (strain DSM 114642 / LMG 32736 / 3841) (Rhizobium leguminosarum bv. viciae).